A 330-amino-acid chain; its full sequence is SUMO-activating enzyme subunit 1 (330 aa).

It belongs to the ubiquitin-activating E1 family. As to quaternary structure, heterodimer of sae1 and sae2. The complex binds sumo via sae2.

It localises to the nucleus. Its pathway is protein modification; protein sumoylation. Functionally, the dimeric enzyme acts as an E1 ligase for sumo. It mediates ATP-dependent activation of sumo and formation of a thioester with a conserved cysteine residue on sae2. The sequence is that of SUMO-activating enzyme subunit 1 (sae1) from Dictyostelium discoideum (Social amoeba).